Here is a 182-residue protein sequence, read N- to C-terminus: Protein YopQ (182 aa).

A signal peptide spans M1–I24.

Its subcellular location is the secreted. Functionally, may function as a virulence determinant. This chain is Protein YopQ (yopQ), found in Yersinia enterocolitica.